The chain runs to 538 residues: Efflux pump radE (538 aa).

Composition is skewed to basic and acidic residues over residues 1–12 (MATSRDFGREPP), 20–35 (EAGH…VSEH), and 65–74 (DPKEEERDPN). Disordered stretches follow at residues 1–35 (MATS…VSEH) and 65–90 (DPKE…PQNW). The next 12 helical transmembrane spans lie at 100–120 (AVLS…APGI), 134–154 (LATF…LVLA), 163–183 (VVIY…CALS), 194–214 (FLCG…IADL), 225–245 (SVWS…GGFL), 253–273 (WIFW…LLVL), 327–347 (PICL…YFMI), 362–382 (EGIV…GVVV), 409–429 (IPPT…YGWT), 436–456 (WAVP…INIS), 482–502 (IFGA…GLGW), and 505–525 (SLLA…FYYG).

This sequence belongs to the major facilitator superfamily.

It is found in the cell membrane. In terms of biological role, efflux pump that might be required for efficient secretion of radicicol or other secondary metabolies produced by the radicicol gene cluster. The protein is Efflux pump radE of Floropilus chiversii (Chaetomium chiversii).